The primary structure comprises 715 residues: Fatty acid oxidation complex subunit alpha (715 aa).

The interval 1-190 is enoyl-CoA hydratase; the sequence is MTTTSAFMLN…KAGLVDDVVP (190 aa). The interval 306–715 is 3-hydroxyacyl-CoA dehydrogenase; sequence GPLNSVGILG…WTNGETDQGN (410 aa).

The protein in the N-terminal section; belongs to the enoyl-CoA hydratase/isomerase family. This sequence in the central section; belongs to the 3-hydroxyacyl-CoA dehydrogenase family. In terms of assembly, heterotetramer of two alpha chains (FadJ) and two beta chains (FadI).

The protein localises to the cytoplasm. The catalysed reaction is a (3S)-3-hydroxyacyl-CoA = a (2E)-enoyl-CoA + H2O. It catalyses the reaction a 4-saturated-(3S)-3-hydroxyacyl-CoA = a (3E)-enoyl-CoA + H2O. It carries out the reaction a (3S)-3-hydroxyacyl-CoA + NAD(+) = a 3-oxoacyl-CoA + NADH + H(+). The enzyme catalyses (3S)-3-hydroxybutanoyl-CoA = (3R)-3-hydroxybutanoyl-CoA. It participates in lipid metabolism; fatty acid beta-oxidation. Catalyzes the formation of a hydroxyacyl-CoA by addition of water on enoyl-CoA. Also exhibits 3-hydroxyacyl-CoA epimerase and 3-hydroxyacyl-CoA dehydrogenase activities. The sequence is that of Fatty acid oxidation complex subunit alpha from Salmonella gallinarum (strain 287/91 / NCTC 13346).